Reading from the N-terminus, the 233-residue chain is tRNA (guanine-N(1)-)-methyltransferase (233 aa).

Residues Gly-113 and 133–138 (VGDYVL) each bind S-adenosyl-L-methionine.

The protein belongs to the RNA methyltransferase TrmD family. Homodimer.

The protein resides in the cytoplasm. The catalysed reaction is guanosine(37) in tRNA + S-adenosyl-L-methionine = N(1)-methylguanosine(37) in tRNA + S-adenosyl-L-homocysteine + H(+). Specifically methylates guanosine-37 in various tRNAs. In Rhizobium etli (strain ATCC 51251 / DSM 11541 / JCM 21823 / NBRC 15573 / CFN 42), this protein is tRNA (guanine-N(1)-)-methyltransferase.